The primary structure comprises 335 residues: COP9 signalosome complex subunit 5 (335 aa).

The 137-residue stretch at 51–187 (VRISAVALLK…IGAFRTFPKD (137 aa)) folds into the MPN domain. Zn(2+) contacts are provided by histidine 134, histidine 136, and aspartate 147. Residues 134–147 (HSHPGYGCWLSGID) carry the JAMM motif motif.

Belongs to the peptidase M67A family. CSN5 subfamily. Component of the COP9 signalosome (CSN) complex.

It is found in the cytoplasm. The protein localises to the nucleus. Its function is as follows. Catalytic component of the COP9 signalosome (CSN) complex that acts as an regulator of the ubiquitin (Ubl) conjugation pathway by mediating the deneddylation of the cullin subunit of SCF-type E3 ubiquitin-protein ligase complexes. The CSN complex seems to link protein degradation to sexual development. Required for fruit body formation. This chain is COP9 signalosome complex subunit 5 (rri1), found in Emericella nidulans (strain FGSC A4 / ATCC 38163 / CBS 112.46 / NRRL 194 / M139) (Aspergillus nidulans).